The following is a 222-amino-acid chain: Translation initiation factor 6 (222 aa).

The protein belongs to the eIF-6 family.

In terms of biological role, binds to the 50S ribosomal subunit and prevents its association with the 30S ribosomal subunit to form the 70S initiation complex. The protein is Translation initiation factor 6 of Methanothermobacter thermautotrophicus (strain ATCC 29096 / DSM 1053 / JCM 10044 / NBRC 100330 / Delta H) (Methanobacterium thermoautotrophicum).